The sequence spans 611 residues: RAC serine/threonine-protein kinase (611 aa).

The span at 14-25 (VVASAPAPGSAS) shows a compositional bias: low complexity. Disordered regions lie at residues 14–33 (VVASAPAPGSASRIPESPTT) and 45–88 (QSTH…NTTF). At Ser-30 the chain carries Phosphoserine. The PH domain occupies 106–211 (QVVKEGWLMK…WTEAIRNVSS (106 aa)). The 258-residue stretch at 266–523 (FEFLKVLGKG…VKEIQAHPFF (258 aa)) folds into the Protein kinase domain. Residues 272–280 (LGKGTFGKV) and Lys-295 contribute to the ATP site. The Proton acceptor role is filled by Asp-389. The 74-residue stretch at 524–597 (ASINWTDLVL…QGDMASTLGT (74 aa)) folds into the AGC-kinase C-terminal domain. At Ser-586 the chain carries Phosphoserine.

This sequence belongs to the protein kinase superfamily. AGC Ser/Thr protein kinase family. RAC subfamily. In terms of assembly, interacts with trbl. In terms of processing, phosphorylated and activated by Pk61C/PDK1. Phosphorylated on Ser-586 by the TORC2 complex. As to expression, ubiquitously expressed. Present in ovary, where it is concentrated at the basal side of follicle cells.

The protein resides in the cytoplasm. It localises to the cytosol. It is found in the cell membrane. The enzyme catalyses L-seryl-[protein] + ATP = O-phospho-L-seryl-[protein] + ADP + H(+). It carries out the reaction L-threonyl-[protein] + ATP = O-phospho-L-threonyl-[protein] + ADP + H(+). In terms of biological role, serine/threonine kinase involved in various developmental processes. During early embryogenesis, acts as a survival protein. During mid-embryogenesis, phosphorylates and activates trh, a transcription factor required for tracheal cell fate determination. Also regulates tracheal cell migration. Later in development, acts downstream of PI3K and Pk61C/PDK1 in the insulin receptor transduction pathway which regulates cell growth and organ size, by phosphorylating and antagonizing FOXO transcription factor. Controls follicle cell size during oogenesis. May also stimulate cell growth by phosphorylating Gig/Tsc2 and inactivating the Tsc complex. Dephosphorylation of 'Ser-586' by Phlpp triggers apoptosis and suppression of tumor growth. This chain is RAC serine/threonine-protein kinase, found in Drosophila melanogaster (Fruit fly).